The sequence spans 438 residues: Exosome complex component RRP45B (438 aa).

Disordered stretches follow at residues 293-322 (PTLAKSEVSGPTVAVKEEHRKSSDQERAAE) and 334-438 (STEE…KNKS). Basic and acidic residues-rich tracts occupy residues 307–322 (VKEEHRKSSDQERAAE) and 334–347 (STEEVRSSKEEEAA). A compositionally biased stretch (polar residues) spans 380–394 (TKSSSTKKMNGSGNA). Over residues 410–429 (LGKKDTKHKDGEMTLKDAVK) the composition is skewed to basic and acidic residues.

Belongs to the RNase PH family.

It is found in the cytoplasm. It localises to the nucleus. In terms of biological role, probable 3'-&gt;5' exoribonuclease involved in the regulation of cuticular wax biosynthesis by controlling the expression of CER3. May act by degrading a specific mRNA species encoding a negative regulator of CER3 transcription. Can perform exosomal functions and complement the yeast rrp45 null mutant. This is Exosome complex component RRP45B from Arabidopsis thaliana (Mouse-ear cress).